Consider the following 969-residue polypeptide: Translation initiation factor IF-2 (969 aa).

Basic and acidic residues predominate over residues 49 to 63 (HLRKSHGATDGDKRK). Disordered stretches follow at residues 49–85 (HLRK…KART), 100–128 (DDVS…REEE), and 143–380 (LRER…SFQA). Positions 105 to 114 (VAEQGQAQVA) are enriched in low complexity. The segment covering 143-181 (LRERQERLEREEAERRAREEAAEAERRRAEEEAAAKRAA) has biased composition (basic and acidic residues). Over residues 182 to 206 (AEAAAAQQAAQQAAAAQQAAAPADS) the composition is skewed to low complexity. Basic and acidic residues predominate over residues 209–260 (DEARAAAERAAQREAAKKAEDAAREAAEKARAEQEEIRKRREAAEAEARAIR). Residues 301–323 (AQARPAAKKPAAAPAATPAPAGA) show a composition bias toward low complexity. Residues 353-366 (SSGGVDRGWRGGPK) are compositionally biased toward gly residues. In terms of domain architecture, tr-type G spans 469–638 (PRPPVVTVMG…LLQAEVLELK (170 aa)). Residues 478–485 (GHVDHGKT) are G1. 478-485 (GHVDHGKT) lines the GTP pocket. The G2 stretch occupies residues 503–507 (GITQH). The segment at 524-527 (DTPG) is G3. Residues 524-528 (DTPGH) and 578-581 (NKID) each bind GTP. A G4 region spans residues 578 to 581 (NKID). The interval 614–616 (SAK) is G5.

The protein belongs to the TRAFAC class translation factor GTPase superfamily. Classic translation factor GTPase family. IF-2 subfamily.

The protein resides in the cytoplasm. In terms of biological role, one of the essential components for the initiation of protein synthesis. Protects formylmethionyl-tRNA from spontaneous hydrolysis and promotes its binding to the 30S ribosomal subunits. Also involved in the hydrolysis of GTP during the formation of the 70S ribosomal complex. This chain is Translation initiation factor IF-2, found in Burkholderia multivorans (strain ATCC 17616 / 249).